The sequence spans 120 residues: Small ribosomal subunit protein uS17 (120 aa).

The span at 1–22 (MMAEAKTGAKATKSAAAGAADG) shows a compositional bias: low complexity. Positions 1 to 46 (MMAEAKTGAKATKSAAAGAADGASKEKGPKHTPSPPKPSGRRKTRI) are disordered.

This sequence belongs to the universal ribosomal protein uS17 family. In terms of assembly, part of the 30S ribosomal subunit.

One of the primary rRNA binding proteins, it binds specifically to the 5'-end of 16S ribosomal RNA. The protein is Small ribosomal subunit protein uS17 of Mycobacterium ulcerans (strain Agy99).